Consider the following 705-residue polypeptide: Translation initiation factor IF-2 (705 aa).

A disordered region spans residues 40–124 (DDQIKALDKK…QPAAPKEIPS (85 aa)). The segment covering 41-58 (DQIKALDKKFKKEQKNDN) has biased composition (basic and acidic residues). Over residues 59–77 (KQSTQNNHQKSNNQNQNKG) the composition is skewed to low complexity. The segment covering 94 to 108 (KGNKKNNRNNKKNNK) has biased composition (basic residues). In terms of domain architecture, tr-type G spans 207–376 (ERPAVVTIMG…GLVAEVQELK (170 aa)). Residues 216–223 (GHVDHGKT) form a G1 region. 216 to 223 (GHVDHGKT) is a GTP binding site. The interval 241–245 (GITQH) is G2. The tract at residues 262-265 (DTPG) is G3. GTP contacts are provided by residues 262-266 (DTPGH) and 316-319 (NKID). Residues 316–319 (NKID) are G4. Residues 352 to 354 (SAL) are G5.

This sequence belongs to the TRAFAC class translation factor GTPase superfamily. Classic translation factor GTPase family. IF-2 subfamily.

It is found in the cytoplasm. Its function is as follows. One of the essential components for the initiation of protein synthesis. Protects formylmethionyl-tRNA from spontaneous hydrolysis and promotes its binding to the 30S ribosomal subunits. Also involved in the hydrolysis of GTP during the formation of the 70S ribosomal complex. In Staphylococcus aureus (strain MSSA476), this protein is Translation initiation factor IF-2.